We begin with the raw amino-acid sequence, 631 residues long: Pescadillo homolog (631 aa).

The 94-residue stretch at 321-414 folds into the BRCT domain; the sequence is RLRTLFKGLK…QLLPTNDYFL (94 aa). Basic and acidic residues predominate over residues 428 to 442; the sequence is SKRDSYIPPEEKALH. Disordered stretches follow at residues 428–471 and 489–560; these read SKRD…EADQ and YKKY…EVDE. Residues S453 and S457 each carry the phosphoserine modification. Composition is skewed to acidic residues over residues 453–471 and 498–525; these read SEEESEEDEAEKEEEEADQ and VNEDEEDLSEEDDEEDDDEEDVDKEDVD. Basic and acidic residues predominate over residues 526–538; the sequence is EQTKRKQQEKEKM. The segment covering 544 to 553 has biased composition (basic residues); that stretch reads KVHKVNKRQV. Positions 593–629 form a coiled coil; the sequence is LRKKRRNIDADTKEAKKAAKREARKLAAEAAARAAKL.

The protein belongs to the pescadillo family.

The protein resides in the nucleus. Its subcellular location is the nucleolus. The protein localises to the nucleoplasm. Required for maturation of ribosomal RNAs and formation of the large ribosomal subunit. This chain is Pescadillo homolog, found in Drosophila persimilis (Fruit fly).